The following is a 199-amino-acid chain: Recombination protein RecR (199 aa).

The C4-type zinc finger occupies 58-73 (CLNCGNIGTSDICDIC). The Toprim domain maps to 81–176 (GEICVVEDVA…AVTSLAQGVP (96 aa)).

Belongs to the RecR family.

In terms of biological role, may play a role in DNA repair. It seems to be involved in an RecBC-independent recombinational process of DNA repair. It may act with RecF and RecO. This chain is Recombination protein RecR, found in Dinoroseobacter shibae (strain DSM 16493 / NCIMB 14021 / DFL 12).